The following is a 115-amino-acid chain: Photosystem II reaction center Psb28 protein (115 aa).

Belongs to the Psb28 family. As to quaternary structure, part of the photosystem II complex.

The protein resides in the plastid. The protein localises to the chloroplast thylakoid membrane. The chain is Photosystem II reaction center Psb28 protein from Cyanidium caldarium (Red alga).